A 379-amino-acid polypeptide reads, in one-letter code: Protein RecA (379 aa).

The disordered stretch occupies residues 1-24 (MSVDVKSAQSSKSDSLQAEPRPGE). A compositionally biased stretch (polar residues) spans 7–16 (SAQSSKSDSL). An ATP-binding site is contributed by 84 to 91 (GPESSGKT).

Belongs to the RecA family.

Its subcellular location is the cytoplasm. In terms of biological role, can catalyze the hydrolysis of ATP in the presence of single-stranded DNA, the ATP-dependent uptake of single-stranded DNA by duplex DNA, and the ATP-dependent hybridization of homologous single-stranded DNAs. It interacts with LexA causing its activation and leading to its autocatalytic cleavage. The protein is Protein RecA of Prochlorococcus marinus (strain MIT 9303).